We begin with the raw amino-acid sequence, 158 residues long: NADPH-dependent 7-cyano-7-deazaguanine reductase (158 aa).

Cys56 (thioimide intermediate) is an active-site residue. Asp63 serves as the catalytic Proton donor. Substrate is bound by residues Leu78–Ser80 and His97–Glu98.

This sequence belongs to the GTP cyclohydrolase I family. QueF type 1 subfamily.

It is found in the cytoplasm. It catalyses the reaction 7-aminomethyl-7-carbaguanine + 2 NADP(+) = 7-cyano-7-deazaguanine + 2 NADPH + 3 H(+). It functions in the pathway tRNA modification; tRNA-queuosine biosynthesis. Functionally, catalyzes the NADPH-dependent reduction of 7-cyano-7-deazaguanine (preQ0) to 7-aminomethyl-7-deazaguanine (preQ1). This chain is NADPH-dependent 7-cyano-7-deazaguanine reductase, found in Nitrobacter winogradskyi (strain ATCC 25391 / DSM 10237 / CIP 104748 / NCIMB 11846 / Nb-255).